Reading from the N-terminus, the 183-residue chain is MTAQELSIRYEVPGARRFGNYIWGSLMCLGGLGFLTIGISSYLDFPILSLVKSSNIQFFPQGLVMCFYGVLGFLLGVYIWLLILWNLGEGFNEFNLETGYVRIFRWGFPGKNRRIDLQYPIQEIQSIRVEIQEGINPKRIIYLKLRGNREIPLTRAGQPLSIQQIETQAAELAKFLQVSLEGI.

The next 2 helical transmembrane spans lie at Y21 to L43 and L63 to W85.

It belongs to the Ycf4 family.

Its subcellular location is the plastid. The protein resides in the chloroplast thylakoid membrane. In terms of biological role, seems to be required for the assembly of the photosystem I complex. The sequence is that of Photosystem I assembly protein Ycf4 from Chlorella vulgaris (Green alga).